The following is a 294-amino-acid chain: Protoheme IX farnesyltransferase (294 aa).

9 helical membrane-spanning segments follow: residues 22–42 (VTQLAVFCAVIGMFLATPELP), 46–66 (IVVAATIGIWLLAGAAFAINC), 89–109 (ITVPQTLVFSGLIGGAGMWVL), 116–136 (LTMWLTFATFVGYAVIYTIIL), 143–163 (NIVIGGLSGAMPPALGWAAVA), 170–190 (AWILVLIIFIWTPPHFWALAL), 212–232 (FTQFHIWLYTIALVATTMLPF), 234–254 (VGMSGLIYLVSVAILDIIFVW), and 272–292 (FAYSIIYLSLLFAALLVDHYL).

Belongs to the UbiA prenyltransferase family. Protoheme IX farnesyltransferase subfamily.

The protein localises to the cell inner membrane. It carries out the reaction heme b + (2E,6E)-farnesyl diphosphate + H2O = Fe(II)-heme o + diphosphate. Its pathway is porphyrin-containing compound metabolism; heme O biosynthesis; heme O from protoheme: step 1/1. Functionally, converts heme B (protoheme IX) to heme O by substitution of the vinyl group on carbon 2 of heme B porphyrin ring with a hydroxyethyl farnesyl side group. The polypeptide is Protoheme IX farnesyltransferase (Janthinobacterium sp. (strain Marseille) (Minibacterium massiliensis)).